The primary structure comprises 425 residues: Dihydroorotase (425 aa).

The Zn(2+) site is built by His59 and His61. Residues 61–63 (HLR) and Asn93 each bind substrate. Asp151, His178, and His231 together coordinate Zn(2+). Asn277 serves as a coordination point for substrate. Asp304 is a binding site for Zn(2+). Asp304 is an active-site residue. Substrate contacts are provided by residues His308 and 322 to 323 (FG).

The protein belongs to the metallo-dependent hydrolases superfamily. DHOase family. Class I DHOase subfamily. Zn(2+) serves as cofactor.

The catalysed reaction is (S)-dihydroorotate + H2O = N-carbamoyl-L-aspartate + H(+). It functions in the pathway pyrimidine metabolism; UMP biosynthesis via de novo pathway; (S)-dihydroorotate from bicarbonate: step 3/3. Catalyzes the reversible cyclization of carbamoyl aspartate to dihydroorotate. This chain is Dihydroorotase, found in Staphylococcus epidermidis (strain ATCC 12228 / FDA PCI 1200).